The sequence spans 381 residues: E3 ubiquitin-protein ligase RNF13 (381 aa).

Positions 1-34 (MLLSIGMLMLSATQVYTILTVQLFAFLNLLPVEA) are cleaved as a signal peptide. At 35 to 182 (DILAYNFENA…VPELSLPLEY (148 aa)) the chain is on the lumenal side. Positions 64–160 (LKGFLINSKP…GESSANSLKD (97 aa)) constitute a PA domain. Asparagine 88 carries an N-linked (GlcNAc...) asparagine glycan. A helical membrane pass occupies residues 183-203 (YLIPFLIIVGICLILIVIFMI). Topologically, residues 204 to 381 (TKFVQDRHRN…EQDYNIANTV (178 aa)) are cytoplasmic. The RING-type; atypical zinc-finger motif lies at 240-282 (CAICLEEYEDGDKLRILPCSHAYHCKCVDPWLTKTKKTCPVCK). A disordered region spans residues 285 to 381 (VVPSQGDSDS…EQDYNIANTV (97 aa)). Residues 317–328 (SARTQSFGSLSE) are compositionally biased toward polar residues. The segment covering 339 to 357 (SDYEDDDNEETDSSDADNE) has biased composition (acidic residues). Over residues 365–381 (VQLQPNGEQDYNIANTV) the composition is skewed to polar residues.

As to quaternary structure, interacts with ERN1. Post-translationally, autoubiquitinated. In terms of processing, N-glycosylated and also modified with chondroitin sulfate. In terms of tissue distribution, expressed in the brain, heart, kidney, liver and spleen. Higher expression in adult tissues compared to the embryonic counterparts.

The protein localises to the endoplasmic reticulum membrane. The protein resides in the late endosome membrane. Its subcellular location is the lysosome membrane. It localises to the nucleus inner membrane. The enzyme catalyses S-ubiquitinyl-[E2 ubiquitin-conjugating enzyme]-L-cysteine + [acceptor protein]-L-lysine = [E2 ubiquitin-conjugating enzyme]-L-cysteine + N(6)-ubiquitinyl-[acceptor protein]-L-lysine.. It functions in the pathway protein modification; protein ubiquitination. Its function is as follows. E3 ubiquitin-protein ligase that regulates cell proliferation. Involved in apoptosis regulation. Mediates ER stress-induced activation of JNK signaling pathway and apoptosis by promoting ERN1 activation and splicing of XBP1 mRNA. Also involved in protein trafficking and localization. In Mus musculus (Mouse), this protein is E3 ubiquitin-protein ligase RNF13 (Rnf13).